The chain runs to 333 residues: UDP-N-acetylenolpyruvoylglucosamine reductase (333 aa).

Residues 12–176 (LPAQCRALIE…TSVVFRLPKD (165 aa)) form the FAD-binding PCMH-type domain. The active site involves R153. S221 (proton donor) is an active-site residue. E317 is an active-site residue.

It belongs to the MurB family. FAD serves as cofactor.

The protein localises to the cytoplasm. It catalyses the reaction UDP-N-acetyl-alpha-D-muramate + NADP(+) = UDP-N-acetyl-3-O-(1-carboxyvinyl)-alpha-D-glucosamine + NADPH + H(+). It functions in the pathway cell wall biogenesis; peptidoglycan biosynthesis. Cell wall formation. This is UDP-N-acetylenolpyruvoylglucosamine reductase from Idiomarina loihiensis (strain ATCC BAA-735 / DSM 15497 / L2-TR).